The primary structure comprises 490 residues: MAIELGLFAKTALASRFTDWAKQYGPVFPLRIGSHGLMVVLTSAYHATHLLDKRSANSSNRPPSFVLGDLVFAGDHPMFMDANERWKLRRKLYFQLMNEARCNTEHIRLVEAEATHLLRDLCLEPDSFMQHPARYSNSIIMSLVFGIRTPHYSSPHCIELQRIVTELSNLGEIGASPPVDWLPFLKYLPERLWGDWKTRAARLRQRVLNLHSPLVDRVLERRKNIGTAATFLDGVLDRQEKLQLTREEIDIMCGNLLEGGTDTMATTILTFFQAMVTYPEVQARAQKQIDSVLTDGECPSWSDYDRLPYVAMIVKEVLRWRPPAPGSFPHTLAQDDEFEGMKFLKGTSVVLNVWGIHNDESRYPSPETFEPSRFAEQTRLASVYANAGDAQKRDHFGYGAGRRICPGIHLAERALFIAMAKLLWGFTVQQKLDSSGNPIPVDVNPATAYRDGFLNQCLPFDIDIKPRLGRQEMIMVAAAKAENDVLSAYE.

Position 405 (C405) interacts with heme.

Belongs to the cytochrome P450 family. It depends on heme as a cofactor.

It carries out the reaction 2-hydroxymethyl-3-pentylphenol + reduced [NADPH--hemoprotein reductase] + O2 = (8S)-annullatin E + oxidized [NADPH--hemoprotein reductase] + H2O + H(+). It participates in secondary metabolite biosynthesis. Functionally, cytochrome P450 monooxygenase; part of the gene cluster that mediates the biosynthesis of annullatin D, an alkylated aromatic polyketide with a fused dihydrobenzofuran lactone ring system that exhibits potent agonistic activities toward the cannabinoid receptors. Within the pathway, anuE catalyzes the hydroxylation of 2-hydroxymethyl-3-pentylphenol at the side chain to produce (8S)-annullatin E. The annullatin backbone 2-hydroxymethyl-3-pentylphenol is assembled from one acetyl-CoA starter unit and 5 malonyl-CoA elongation units by cooperation of the highly reducing polyketide synthase anuA, the short-chain dehydrogenase anuB and the oxidoreductase anuC, before being hydroxylated at the C-5 alkyl chain by the cytochrome P450 monooxygenase anuE to form (8S)-annullatin E. The prenyltransferase anuH subsequently installs one isoprenyl group at the benzene ring to form (8S)-annullatin J. Enzymatic or nonenzymatic dihydro-benzofuran ring formation between the prenyl and the phenolic hydroxyl groups in (8S)-annullatin J results in two diastereomers (2S,9S)-annullatin H and compound 12. The intermediate (2S,9S)-annullatin H is then converted to (2S,9S)-annullatin D by the FAD-linked oxidoreductase anuG-catalyzed five-member lactone ring formation. The isomer 12 acts as a substrate for the short-chain dehydrogenase anuF and is oxidized to (2R)-annullatin F, which is subsequently acetylated by an acetyltransferase leading to (2R)-annullatin G formation. The remaining enzymes identified within the cluster, anuD, anuI and anuJ, seem not to be involved in annullatin biosynthesis. This chain is Cytochrome P450 monooxygenase anuE, found in Penicillium roqueforti (strain FM164).